Reading from the N-terminus, the 145-residue chain is Small ribosomal subunit protein uS9 (145 aa).

This sequence belongs to the universal ribosomal protein uS9 family.

Its subcellular location is the cytoplasm. The polypeptide is Small ribosomal subunit protein uS9 (RPS16) (Gossypium hirsutum (Upland cotton)).